Consider the following 278-residue polypeptide: Urease accessory protein UreD (278 aa).

The protein belongs to the UreD family. In terms of assembly, ureD, UreF and UreG form a complex that acts as a GTP-hydrolysis-dependent molecular chaperone, activating the urease apoprotein by helping to assemble the nickel containing metallocenter of UreC. The UreE protein probably delivers the nickel.

The protein resides in the cytoplasm. Functionally, required for maturation of urease via the functional incorporation of the urease nickel metallocenter. The protein is Urease accessory protein UreD of Escherichia coli.